Reading from the N-terminus, the 871-residue chain is DNA mismatch repair protein MutS 1 (871 aa).

614-621 serves as a coordination point for ATP; the sequence is GPNMSGKS.

It belongs to the DNA mismatch repair MutS family.

In terms of biological role, this protein is involved in the repair of mismatches in DNA. It is possible that it carries out the mismatch recognition step. This protein has a weak ATPase activity. The polypeptide is DNA mismatch repair protein MutS 1 (Halobacterium salinarum (strain ATCC 29341 / DSM 671 / R1)).